Consider the following 457-residue polypeptide: Glutamyl-tRNA reductase (457 aa).

Residues 49–52, serine 109, 114–116, and glutamine 120 contribute to the substrate site; these read TCNR and ETQ. Cysteine 50 functions as the Nucleophile in the catalytic mechanism. An NADP(+)-binding site is contributed by 189–194; the sequence is GAGKMG.

Belongs to the glutamyl-tRNA reductase family. In terms of assembly, homodimer.

The catalysed reaction is (S)-4-amino-5-oxopentanoate + tRNA(Glu) + NADP(+) = L-glutamyl-tRNA(Glu) + NADPH + H(+). It functions in the pathway porphyrin-containing compound metabolism; protoporphyrin-IX biosynthesis; 5-aminolevulinate from L-glutamyl-tRNA(Glu): step 1/2. Functionally, catalyzes the NADPH-dependent reduction of glutamyl-tRNA(Glu) to glutamate 1-semialdehyde (GSA). This Oceanobacillus iheyensis (strain DSM 14371 / CIP 107618 / JCM 11309 / KCTC 3954 / HTE831) protein is Glutamyl-tRNA reductase.